The following is a 314-amino-acid chain: Glutamyl-Q tRNA(Asp) synthetase (314 aa).

Residues 14–18 and glutamate 50 each bind L-glutamate; that span reads RFAPS. The 'HIGH' region motif lies at 17–27; sequence PSPTGPLHVGS. Cysteine 106, cysteine 108, tyrosine 129, and cysteine 133 together coordinate Zn(2+). Residues tyrosine 187 and arginine 205 each contribute to the L-glutamate site. Positions 243-247 match the 'KMSKS' region motif; sequence KLSKR. An ATP-binding site is contributed by lysine 246.

This sequence belongs to the class-I aminoacyl-tRNA synthetase family. GluQ subfamily. Requires Zn(2+) as cofactor.

Catalyzes the tRNA-independent activation of glutamate in presence of ATP and the subsequent transfer of glutamate onto a tRNA(Asp). Glutamate is transferred on the 2-amino-5-(4,5-dihydroxy-2-cyclopenten-1-yl) moiety of the queuosine in the wobble position of the QUC anticodon. This Geobacter sulfurreducens (strain ATCC 51573 / DSM 12127 / PCA) protein is Glutamyl-Q tRNA(Asp) synthetase.